Reading from the N-terminus, the 345-residue chain is Isocitrate/homoisocitrate dehydrogenase (345 aa).

NADH is bound at residue 69–71; it reads TTT. The (2R,3S)-homoisocitrate site is built by Arg-86, Arg-96, Arg-111, Tyr-118, Lys-163, and Asn-165. Asn-165 contributes to the NADH binding site. 3 residues coordinate Mg(2+): Asp-194, Asp-218, and Asp-222. Residues 251 to 255 and Asn-263 each bind NADH; that span reads GSAPD.

It belongs to the isocitrate and isopropylmalate dehydrogenases family. Mn(2+) is required as a cofactor. The cofactor is Mg(2+).

It carries out the reaction D-threo-isocitrate + NAD(+) = 2-oxoglutarate + CO2 + NADH. It catalyses the reaction (2R,3S)-homoisocitrate + NAD(+) = 2-oxoadipate + CO2 + NADH. Its pathway is amino-acid biosynthesis; L-lysine biosynthesis via AAA pathway; L-alpha-aminoadipate from 2-oxoglutarate: step 4/5. Its function is as follows. Catalyzes the NAD(+)-dependent oxidative decarboxylation of homoisocitrate to 2-oxoadipate (alpha-ketoadipate), and of isocitrate to 2-oxoglutarate, at near equal efficiency. May thus play a dual role in glutamate and lysine biosynthesis in vivo. Preferentially uses NAD over NADP. This Pyrococcus horikoshii (strain ATCC 700860 / DSM 12428 / JCM 9974 / NBRC 100139 / OT-3) protein is Isocitrate/homoisocitrate dehydrogenase.